A 232-amino-acid polypeptide reads, in one-letter code: Large ribosomal subunit protein uL1 (232 aa).

It belongs to the universal ribosomal protein uL1 family. In terms of assembly, part of the 50S ribosomal subunit.

Functionally, binds directly to 23S rRNA. The L1 stalk is quite mobile in the ribosome, and is involved in E site tRNA release. Its function is as follows. Protein L1 is also a translational repressor protein, it controls the translation of the L11 operon by binding to its mRNA. This Paraburkholderia phymatum (strain DSM 17167 / CIP 108236 / LMG 21445 / STM815) (Burkholderia phymatum) protein is Large ribosomal subunit protein uL1.